A 425-amino-acid polypeptide reads, in one-letter code: Probable aminotransferase tcpI (425 aa).

Lysine 256 is subject to N6-(pyridoxal phosphate)lysine.

This sequence belongs to the class-I pyridoxal-phosphate-dependent aminotransferase family. Pyridoxal 5'-phosphate serves as cofactor.

The protein operates within secondary metabolite biosynthesis. Its function is as follows. Probable aminotransferase; part of the gene cluster that mediates the biosynthesis of an unusual class of epipolythiodioxopiperazines (ETPs) lacking the reactive thiol group important for toxicity. Firstly, L-tyrosine is prenylated by tcpD, before undergoing condensation with L-glycine in a reaction catalyzed by the NRPS tcpP leading to the diketopiperazine (DKP) backbone. Afterwards the alpha-carbon of tyrosine is oxidized by the cytochrome P450 tcpC to form a hydroxyl group. However, in contrast other ETP biosynthesis pathways studied so far, tcpC is not able to bishydroxylate the DKP at both alpha-carbon positions, but hydroxylates the alpha-carbon of the tyrosine part and the nitrogen of the glycine part. The next steps involve an alpha,beta-elimination reaction catalyzed by tcpI, a methylation by the methyltransferase tcpN the action of the four enzyme cascade tcpG/K/J/I. Due to a dysfunctional cytochrome P450 monooxygenase tcpC, the pathway leads to the biosynthesis of probable non-toxic metabolites lacking the reactive thiol group. This chain is Probable aminotransferase tcpI, found in Claviceps purpurea (strain 20.1) (Ergot fungus).